A 59-amino-acid chain; its full sequence is Protein translocase subunit SecE (59 aa).

A helical membrane pass occupies residues 37–57 (LIVLLFVGLLAFLVQLAFSIL).

The protein belongs to the SecE/SEC61-gamma family. In terms of assembly, component of the Sec protein translocase complex. Heterotrimer consisting of SecY (alpha), SecG (beta) and SecE (gamma) subunits. The heterotrimers can form oligomers, although 1 heterotrimer is thought to be able to translocate proteins. Interacts with the ribosome. May interact with SecDF, and other proteins may be involved.

The protein resides in the cell membrane. Essential subunit of the Sec protein translocation channel SecYEG. Clamps together the 2 halves of SecY. May contact the channel plug during translocation. This Metallosphaera sedula (strain ATCC 51363 / DSM 5348 / JCM 9185 / NBRC 15509 / TH2) protein is Protein translocase subunit SecE.